Consider the following 185-residue polypeptide: Lactoylglutathione lyase (185 aa).

The tract at residues 1–22 (MASEARESPANNPGLSTNRDEA) is disordered. The 148-residue stretch at 27–174 (IMQQTMFRIK…DGYWIEIFDL (148 aa)) folds into the VOC domain. Residues Gln-30 and Arg-34 each coordinate substrate. Residue Gln-30 coordinates Zn(2+). Position 96 (Glu-96) interacts with Zn(2+). Residues Asn-100, Arg-120, His-124, and 154–155 (KM) contribute to the substrate site. His-124 is a Zn(2+) binding site. Position 170 (Glu-170) interacts with Zn(2+). The active-site Proton donor/acceptor is Glu-170.

The protein belongs to the glyoxalase I family. Zn(2+) serves as cofactor.

The enzyme catalyses (R)-S-lactoylglutathione = methylglyoxal + glutathione. Its pathway is secondary metabolite metabolism; methylglyoxal degradation; (R)-lactate from methylglyoxal: step 1/2. Catalyzes the conversion of hemimercaptal, formed from methylglyoxal and glutathione, to S-lactoylglutathione. The polypeptide is Lactoylglutathione lyase (Arabidopsis thaliana (Mouse-ear cress)).